A 563-amino-acid chain; its full sequence is Adenine deaminase (563 aa).

The protein belongs to the metallo-dependent hydrolases superfamily. Adenine deaminase family. Mn(2+) is required as a cofactor.

It catalyses the reaction adenine + H2O + H(+) = hypoxanthine + NH4(+). The polypeptide is Adenine deaminase (Lactiplantibacillus plantarum (strain ATCC BAA-793 / NCIMB 8826 / WCFS1) (Lactobacillus plantarum)).